The following is an 85-amino-acid chain: U4-theraphotoxin-Hhn1a (85 aa).

A signal peptide spans 1–22 (MKVTLIVILTCAAVLVLHTTAA). A propeptide spanning residues 23–48 (EELEAESQLMEVGMPDTELAAVDEER) is cleaved from the precursor. Cystine bridges form between cysteine 52–cysteine 66, cysteine 56–cysteine 77, and cysteine 71–cysteine 82.

This sequence belongs to the neurotoxin 12 (Hwtx-2) family. 02 (Hwtx-2) subfamily. Monomer. In terms of tissue distribution, expressed by the venom gland.

The protein resides in the secreted. Neurotoxin active on both insects and mammals. In Cyriopagopus hainanus (Chinese bird spider), this protein is U4-theraphotoxin-Hhn1a.